The primary structure comprises 406 residues: Cytochrome bc1 complex Rieske iron-sulfur subunit (406 aa).

3 helical membrane passes run 56–76 (VGIW…VYLF), 98–118 (LLGL…IFYI), and 166–186 (MLGI…GGMV). The Rieske domain occupies 291 to 388 (HGPRNAVMLI…ITVDEEGYLV (98 aa)). Residues Cys331, His333, Cys350, and His353 each contribute to the [2Fe-2S] cluster site. Cysteines 336 and 352 form a disulfide.

It belongs to the Rieske iron-sulfur protein family. As to quaternary structure, the cytochrome bc1 complex is composed of a cytochrome b (QcrB), the Rieske iron-sulfur protein (QcrA) and a diheme cytochrome c (QcrC) subunit. The bc1 complex forms a supercomplex with cytochrome c oxidase (cytochrome aa3). The cofactor is [2Fe-2S] cluster.

The protein localises to the cell membrane. Its function is as follows. Iron-sulfur subunit of the cytochrome bc1 complex, an essential component of the respiratory electron transport chain required for ATP synthesis. The bc1 complex catalyzes the oxidation of menaquinol and the reduction of cytochrome c in the respiratory chain. The bc1 complex operates through a Q-cycle mechanism that couples electron transfer to generation of the proton gradient that drives ATP synthesis. The protein is Cytochrome bc1 complex Rieske iron-sulfur subunit (qcrA) of Corynebacterium diphtheriae (strain ATCC 700971 / NCTC 13129 / Biotype gravis).